Here is a 432-residue protein sequence, read N- to C-terminus: Putative D-alanyl-D-alanine carboxypeptidase (432 aa).

The chain crosses the membrane as a helical; Signal-anchor span at residues Ala7–Leu25.

The protein belongs to the peptidase S12 family. YfeW subfamily.

It is found in the cell inner membrane. It catalyses the reaction Preferential cleavage: (Ac)2-L-Lys-D-Ala-|-D-Ala. Also transpeptidation of peptidyl-alanyl moieties that are N-acyl substituents of D-alanine.. The protein is Putative D-alanyl-D-alanine carboxypeptidase of Salmonella choleraesuis (strain SC-B67).